A 210-amino-acid chain; its full sequence is WASH complex subunit 3 (210 aa).

Positions 49–73 (EEKLASISLRIQQIETTLSILEAKL) form a coiled coil. Residues 173-210 (LDPNLLDTPDAPVPDAVKKNTLDQDDDSDDGSESSFSD) form a disordered region. Positions 195–204 (DQDDDSDDGS) are enriched in acidic residues.

The protein belongs to the CCDC53 family. As to quaternary structure, component of the WASH complex.

The protein is WASH complex subunit 3 of Salmo salar (Atlantic salmon).